A 321-amino-acid polypeptide reads, in one-letter code: Citrate synthase (321 aa).

Catalysis depends on residues His248 and Asp306.

This sequence belongs to the citrate synthase family.

The enzyme catalyses oxaloacetate + acetyl-CoA + H2O = citrate + CoA + H(+). Its pathway is carbohydrate metabolism; tricarboxylic acid cycle; isocitrate from oxaloacetate: step 1/2. The protein is Citrate synthase (gltA) of Bartonella elizabethae (Rochalimaea elizabethae).